Consider the following 743-residue polypeptide: Serine-rich coiled-coil domain-containing protein 1 (743 aa).

2 disordered regions span residues 1 to 125 (MGDS…SRNK) and 156 to 175 (KSEGDDSGFTEEQTRRSVKQ). Over residues 29–56 (LPSSPSSSNTVGVHSSSPSSTNSSSGST) the composition is skewed to low complexity. The segment covering 81–102 (EPTNQNLSISNGAQPGQSSMQK) has biased composition (polar residues). Residues 672-713 (MKDECSMLKLQLKEKDELISQLQEELEKVQHLQKAFASRVDK) adopt a coiled-coil conformation.

The protein belongs to the CCSER family.

In Bos taurus (Bovine), this protein is Serine-rich coiled-coil domain-containing protein 1 (CCSER1).